The sequence spans 251 residues: DNA repair protein RecO (251 aa).

This sequence belongs to the RecO family.

In terms of biological role, involved in DNA repair and RecF pathway recombination. This is DNA repair protein RecO from Staphylococcus saprophyticus subsp. saprophyticus (strain ATCC 15305 / DSM 20229 / NCIMB 8711 / NCTC 7292 / S-41).